The primary structure comprises 328 residues: Glucokinase (328 aa).

16-21 contributes to the ATP binding site; the sequence is ADIGGT.

This sequence belongs to the bacterial glucokinase family.

It localises to the cytoplasm. It catalyses the reaction D-glucose + ATP = D-glucose 6-phosphate + ADP + H(+). The protein is Glucokinase of Neisseria meningitidis serogroup C (strain 053442).